Here is a 347-residue protein sequence, read N- to C-terminus: D-alanine--D-alanine ligase (347 aa).

One can recognise an ATP-grasp domain in the interval 131-333; that stretch reads KRVLESAGIA…YPDLIERLVE (203 aa). 161-216 is a binding site for ATP; sequence EEELTYPVFTKPSNMGSSVGISKSENQEELRQALKLAFQYDSRVLVEQGVNAREIE. Residues D287, E300, and N302 each contribute to the Mg(2+) site.

The protein belongs to the D-alanine--D-alanine ligase family. Requires Mg(2+) as cofactor. It depends on Mn(2+) as a cofactor.

It localises to the cytoplasm. It catalyses the reaction 2 D-alanine + ATP = D-alanyl-D-alanine + ADP + phosphate + H(+). Its pathway is cell wall biogenesis; peptidoglycan biosynthesis. Its function is as follows. Cell wall formation. This chain is D-alanine--D-alanine ligase, found in Streptococcus pneumoniae (strain Hungary19A-6).